Consider the following 412-residue polypeptide: Squamosa promoter-binding-like protein 2 (412 aa).

The interval 1–81 (MDWDAKMPSW…AAAAGKRARA (81 aa)) is disordered. A compositionally biased stretch (gly residues) spans 18 to 31 (PSGGGGGGGGGGGA). Composition is skewed to low complexity over residues 48-57 (VSAASAAPAA) and 67-81 (SSSS…RARA). The SBP-type zinc finger occupies 89 to 167 (VPACSVEGCA…DGHNKRRRKP (79 aa)). Positions 92, 97, 115, 118, 134, 137, 141, and 153 each coordinate Zn(2+). The Bipartite nuclear localization signal signature appears at 150–166 (KRSCRKRLDGHNKRRRK).

Expressed in stems, leaf sheaths, and young panicles.

It is found in the nucleus. In terms of biological role, trans-acting factor that binds specifically to the consensus nucleotide sequence 5'-TNCGTACAA-3'. May be involved in panicle development. This Oryza sativa subsp. japonica (Rice) protein is Squamosa promoter-binding-like protein 2 (SPL2).